We begin with the raw amino-acid sequence, 142 residues long: Large ribosomal subunit protein uL11 (142 aa).

Belongs to the universal ribosomal protein uL11 family. Part of the ribosomal stalk of the 50S ribosomal subunit. Interacts with L10 and the large rRNA to form the base of the stalk. L10 forms an elongated spine to which L12 dimers bind in a sequential fashion forming a multimeric L10(L12)X complex. Post-translationally, one or more lysine residues are methylated.

In terms of biological role, forms part of the ribosomal stalk which helps the ribosome interact with GTP-bound translation factors. This is Large ribosomal subunit protein uL11 from Brucella abortus (strain S19).